We begin with the raw amino-acid sequence, 51 residues long: Large ribosomal subunit protein bL33 (51 aa).

Residues Met-1–Lys-23 are disordered. Residues Ser-10–Thr-20 are compositionally biased toward polar residues.

It belongs to the bacterial ribosomal protein bL33 family.

The chain is Large ribosomal subunit protein bL33 from Methylobacillus flagellatus (strain ATCC 51484 / DSM 6875 / VKM B-1610 / KT).